Here is a 66-residue protein sequence, read N- to C-terminus: UPF0337 protein SpyM3_0896 (66 aa).

This sequence belongs to the UPF0337 (CsbD) family.

The chain is UPF0337 protein SpyM3_0896 from Streptococcus pyogenes serotype M3 (strain ATCC BAA-595 / MGAS315).